A 395-amino-acid chain; its full sequence is MFSDLRKKFVFLTMSILIVVVLFLFAVSNRYNQYWDEYDAYRIVKLVAKNDYLGIPGDEPIALVTIDNQKMVKIQSNNTDLTNDVIEKSSLKLLEQGKKSRKWKSFIYSIKEYKDKTYTIAIMDLASYEVPYARRFLILVFTIFGFCLLAAVSLYLSRFIVGPVETEMTREKQFVSDASHELKTPIAAIRANVQVLEQQIPGNRYLDHVVSETKRMEFLIEDLLNLSRLDEKRSKVNFKKLNLSVLCQEVLLTYESLAYEEEKCLNDTIEDDVWIVGEESQIKQILIILLDNAIRHSLSKSEIQFSLKQARRKAILTISNPSAIYSKEVMDNLFERFYQAKDDHADSLSFGLGLSIAKAIVERHKGRIRAYQEKDQLRLEVQLPIDGFWTNTMIN.

Helical transmembrane passes span phenylalanine 9 to asparagine 29 and phenylalanine 136 to leucine 156. Positions aspartate 177 to glycine 387 constitute a Histidine kinase domain. Position 180 is a phosphohistidine; by autocatalysis (histidine 180).

The protein localises to the cell membrane. The catalysed reaction is ATP + protein L-histidine = ADP + protein N-phospho-L-histidine.. Its function is as follows. Member of the two-component regulatory system DltS/DltR. Regulates the expression of the dlt operon. Probably phosphorylates DltR. This chain is Sensor protein DltS (dltS), found in Streptococcus agalactiae serotype III (strain NEM316).